Here is a 406-residue protein sequence, read N- to C-terminus: UPF0754 membrane protein SYNPCC7002_A1087 (406 aa).

The chain crosses the membrane as a helical span at residues 384–404; that stretch reads IVNLGGVLGFLVGVAQSVILL.

The protein belongs to the UPF0754 family.

The protein resides in the cell inner membrane. The protein is UPF0754 membrane protein SYNPCC7002_A1087 of Picosynechococcus sp. (strain ATCC 27264 / PCC 7002 / PR-6) (Agmenellum quadruplicatum).